The following is a 319-amino-acid chain: D-alanine--D-alanine ligase B (319 aa).

Residues 117-312 form the ATP-grasp domain; sequence KQVWQSLGPA…FQQLVLAILA (196 aa). 143–198 serves as a coordination point for ATP; it reads ATELGFPLIVKPAHEGSSIGMAKVNSVDELIAAWKAASTYDSQVLVEQWIQGPEFT. Positions 266, 279, and 281 each coordinate Mg(2+).

It belongs to the D-alanine--D-alanine ligase family. It depends on Mg(2+) as a cofactor. Mn(2+) serves as cofactor.

The protein localises to the cytoplasm. It carries out the reaction 2 D-alanine + ATP = D-alanyl-D-alanine + ADP + phosphate + H(+). The protein operates within cell wall biogenesis; peptidoglycan biosynthesis. Its function is as follows. Cell wall formation. The sequence is that of D-alanine--D-alanine ligase B from Pseudomonas syringae pv. tomato (strain ATCC BAA-871 / DC3000).